Here is a 249-residue protein sequence, read N- to C-terminus: Methylthioribulose-1-phosphate dehydratase (249 aa).

A substrate-binding site is contributed by C102. 2 residues coordinate Zn(2+): H120 and H122. E148 serves as the catalytic Proton donor/acceptor. H205 contributes to the Zn(2+) binding site.

The protein belongs to the aldolase class II family. MtnB subfamily. It depends on Zn(2+) as a cofactor.

It is found in the cytoplasm. It carries out the reaction 5-(methylsulfanyl)-D-ribulose 1-phosphate = 5-methylsulfanyl-2,3-dioxopentyl phosphate + H2O. Its pathway is amino-acid biosynthesis; L-methionine biosynthesis via salvage pathway; L-methionine from S-methyl-5-thio-alpha-D-ribose 1-phosphate: step 2/6. In terms of biological role, catalyzes the dehydration of methylthioribulose-1-phosphate (MTRu-1-P) into 2,3-diketo-5-methylthiopentyl-1-phosphate (DK-MTP-1-P). The polypeptide is Methylthioribulose-1-phosphate dehydratase (Botryotinia fuckeliana (strain B05.10) (Noble rot fungus)).